A 297-amino-acid chain; its full sequence is Syntaxin-4 (297 aa).

Positions 1 to 12 (MRDRTHELRQGD) are enriched in basic and acidic residues. A disordered region spans residues 1-21 (MRDRTHELRQGDDSSDEEDKE). Residues 1 to 275 (MRDRTHELRQ…QKKARKKKVL (275 aa)) are Cytoplasmic-facing. 2 positions are modified to phosphoserine: Ser-14 and Ser-15. Thr-31 bears the Phosphothreonine mark. Ser-36, Ser-117, Ser-208, and Ser-248 each carry phosphoserine. Positions 43 to 163 (HKVRTIRQTI…ERIRRQLKIT (121 aa)) form a coiled coil. The tract at residues 154 to 297 (ERIRRQLKIT…AVIIGVTVVG (144 aa)) is interaction with CENPF. A t-SNARE coiled-coil homology domain is found at 200–262 (LNEISARHSE…ERGQEHVKTA (63 aa)). A helical; Anchor for type IV membrane protein transmembrane segment spans residues 276–296 (IAICVSITVVLLAVIIGVTVV). Position 297 (Gly-297) is a topological domain, extracellular.

The protein belongs to the syntaxin family. Component of the SNARE complex composed of STX4, SNAP23 and VAMP7 that interacts with SYT7 during lysosomal exocytosis. Found in a complex with VAMP8 and SNAP23. Detected in a complex with SNAP23 and STXBP4. Interacts with VAMP2. Interacts with SNAP23 and SNAPIN. Interacts with LLGL1. Interacts (via C-terminus) with CENPF. Interacts with DOC2B. Interacts with STXBP6. Interacts with STXBP3; excludes interaction with DOC2B and SNAP25. Interacts with STXBP4; excludes interaction with VAMP2. Interacts with STXBP5L. Expressed in neutrophils and neutrophil-differentiated HL-60 cells. Expression in neutrophils increases with differentiation.

It localises to the cell membrane. The protein resides in the cell projection. The protein localises to the neuron projection. It is found in the stereocilium. Its function is as follows. Plasma membrane t-SNARE that mediates docking of transport vesicles. Necessary for the translocation of SLC2A4 from intracellular vesicles to the plasma membrane. In neurons, recruited at neurite tips to membrane domains rich in the phospholipid 1-oleoyl-2-palmitoyl-PC (OPPC) which promotes neurite tip surface expression of the dopamine transporter SLC6A3/DAT by facilitating fusion of SLC6A3-containing transport vesicles with the plasma membrane. Together with STXB3 and VAMP2, may also play a role in docking/fusion of intracellular GLUT4-containing vesicles with the cell surface in adipocytes and in docking of synaptic vesicles at presynaptic active zones. Required for normal hearing. The chain is Syntaxin-4 (STX4) from Homo sapiens (Human).